A 200-amino-acid chain; its full sequence is MVKEQVYKSTIKSRPLLFLEMKKVSILLNKGFKEFEVKEKAISENIFQVNTESRKKEIASSVLARLKILDDYLIREIGHGDIESSKAIVLYSIMKTDRLFFEFMNEVFKEKFVFGETFLTDADFNIFFENKQQQSEKVASWNDYTFYKLKQVYIRILFEAGYLKNQKGNREIERPLLNIDVVEHIRALGDGIYMDILVGE.

This sequence belongs to the BrxA family.

BREX systems (bacteriophage exclusion) provide immunity against bacteriophage. Part of a type 1 BREX system. This system allows phage adsorption but prevents phage DNA replication, without degradation of the phage DNA. Methylation of bacterial DNA by PglX probably guides self/non-self discrimination. When the brxA-brxB-brxC-pglX and pglZ-brxL operons are transformed into a susceptible B.subtilis strain (BEST7003) they confer resistance to bacteriophages SPbeta, SP16, Zeta, phi3T and SP02 and partial protection to phages SP01 and SP82G (these include lytic and temperate phage). They do not protect against phages phi105, rho10 or rho14. Additionally confers a very slight reduction in efficiency of plasmid transformation. The polypeptide is BREX protein BrxA (Bacillus cereus (strain H3081.97)).